Reading from the N-terminus, the 141-residue chain is Putative pre-16S rRNA nuclease (141 aa).

This sequence belongs to the YqgF nuclease family.

It is found in the cytoplasm. In terms of biological role, could be a nuclease involved in processing of the 5'-end of pre-16S rRNA. The chain is Putative pre-16S rRNA nuclease from Chlorobium luteolum (strain DSM 273 / BCRC 81028 / 2530) (Pelodictyon luteolum).